A 506-amino-acid chain; its full sequence is Maturase K (506 aa).

It belongs to the intron maturase 2 family. MatK subfamily.

The protein localises to the plastid. It is found in the chloroplast. Its function is as follows. Usually encoded in the trnK tRNA gene intron. Probably assists in splicing its own and other chloroplast group II introns. The chain is Maturase K from Sullivantia sullivantii (Sullivant's coolwort).